The sequence spans 483 residues: UDP-N-acetylmuramate--L-alanine ligase (483 aa).

128-134 (GTHGKTT) lines the ATP pocket.

Belongs to the MurCDEF family.

The protein localises to the cytoplasm. The enzyme catalyses UDP-N-acetyl-alpha-D-muramate + L-alanine + ATP = UDP-N-acetyl-alpha-D-muramoyl-L-alanine + ADP + phosphate + H(+). Its pathway is cell wall biogenesis; peptidoglycan biosynthesis. Its function is as follows. Cell wall formation. This is UDP-N-acetylmuramate--L-alanine ligase from Shewanella violacea (strain JCM 10179 / CIP 106290 / LMG 19151 / DSS12).